A 164-amino-acid chain; its full sequence is Peptide deformylase (164 aa).

The Fe cation site is built by Cys-87 and His-129. Glu-130 is a catalytic residue. A Fe cation-binding site is contributed by His-133.

Belongs to the polypeptide deformylase family. Fe(2+) is required as a cofactor.

The catalysed reaction is N-terminal N-formyl-L-methionyl-[peptide] + H2O = N-terminal L-methionyl-[peptide] + formate. Its function is as follows. Removes the formyl group from the N-terminal Met of newly synthesized proteins. Requires at least a dipeptide for an efficient rate of reaction. N-terminal L-methionine is a prerequisite for activity but the enzyme has broad specificity at other positions. In Thermotoga sp. (strain RQ2), this protein is Peptide deformylase.